The sequence spans 635 residues: MHLSEITHPNQLHGLSIRQLEDIARQIREKHLQTVATSGGHLGPGLGVVELTIALYQTLDLDRDKVIWDVGHQAYPHKMLTGRYNNFNTLRQKNGIAGYLKRCESKFDHFGAGHASTSISAALGMALARDAQGEDYKVAAIIGDGALTGGMALEAINHAGHLPNTNLMVILNDNEMSISPNVGAISRYLNKVRLSEPVQFLSDNLEEQFKHLPFFGDVTPEMDRLKEGMKRLAVPKVGAVIEELGFKYFGPIDGHNLRELINTFKQAHKVHGPVFVHVATVKGKGYELAEQDQVGYHAQSPFNLVTGKPIPSSKPKPPGYSKVFAHTLTKLAENNPKIIGITAAMATGTGLDKLQQKLPKQYIDVGIAEQHAVTLAAGLACEGMRPVVAIYSTFLQRAYDQVIHDVCIQNLPVFFCMDRAGIVGADGPTHQGMYDIAYLRCIPNLVIMAPKDEAELQRMIVTGVNYTDGPIAMRYPRGNGLGVPLMEEGWEALPIGKGEILRNGDDLLLLGYGTMVNTAMQVAEILGEHGIEATVVNARFVKPLDTDLIVPLAKQTGKVVTLEEGCLMGGFGSAVAEALLDHNVLVPVKRFGVPDQLVDHAKPDESFADLGLTSSQIADEVLKSFFKTQEPSVIS.

Thiamine diphosphate-binding positions include histidine 72 and 113–115 (GHA). Aspartate 144 serves as a coordination point for Mg(2+). Thiamine diphosphate is bound by residues 145-146 (GA), asparagine 174, tyrosine 286, and glutamate 369. Asparagine 174 lines the Mg(2+) pocket.

This sequence belongs to the transketolase family. DXPS subfamily. As to quaternary structure, homodimer. Mg(2+) serves as cofactor. Thiamine diphosphate is required as a cofactor.

It catalyses the reaction D-glyceraldehyde 3-phosphate + pyruvate + H(+) = 1-deoxy-D-xylulose 5-phosphate + CO2. The protein operates within metabolic intermediate biosynthesis; 1-deoxy-D-xylulose 5-phosphate biosynthesis; 1-deoxy-D-xylulose 5-phosphate from D-glyceraldehyde 3-phosphate and pyruvate: step 1/1. In terms of biological role, catalyzes the acyloin condensation reaction between C atoms 2 and 3 of pyruvate and glyceraldehyde 3-phosphate to yield 1-deoxy-D-xylulose-5-phosphate (DXP). This is 1-deoxy-D-xylulose-5-phosphate synthase from Gloeothece citriformis (strain PCC 7424) (Cyanothece sp. (strain PCC 7424)).